A 321-amino-acid chain; its full sequence is RNA/RNP complex-1-interacting phosphatase (321 aa).

Basic residues predominate over residues 1-11; that stretch reads MNQHYGRHGRG. Positions 1-27 are disordered; it reads MNQHYGRHGRGRGRDFAACAPPKKKGR. Positions 60–207 constitute a Tyrosine-protein phosphatase domain; that stretch reads FEAKLMPEEC…LQKRHVRKNR (148 aa). Cysteine 151 serves as the catalytic Phosphocysteine intermediate. Residue 152 to 157 coordinates substrate; sequence THGLNR. Arginine 157 acts as the Proton donor/acceptor in catalysis. The segment at 205-262 is disordered; the sequence is KNRNVSAPRTDGLEDSADPTEQVYTNNKPVKKKPRKNRRGGHLAPSQHFQHQTQSSPY. Residues 233–245 are compositionally biased toward basic residues; the sequence is PVKKKPRKNRRGG. The segment covering 251–262 has biased composition (polar residues); sequence QHFQHQTQSSPY.

Belongs to the protein-tyrosine phosphatase family. Non-receptor class dual specificity subfamily. In terms of assembly, monomer. May interact with SFRS7 and SFRS9/SRP30C.

It is found in the nucleus. The protein localises to the nucleus speckle. Functionally, possesses RNA 5'-triphosphatase and diphosphatase activities, but displays a poor protein-tyrosine phosphatase activity. In addition, has phosphatase activity with ATP, ADP and O-methylfluorescein phosphate (in vitro). Binds to RNA. May participate in nuclear mRNA metabolism. The chain is RNA/RNP complex-1-interacting phosphatase (Dusp11) from Mus musculus (Mouse).